Consider the following 219-residue polypeptide: MVDSIIVLSGGMDSAVLLAQTLKEGKTAQAISFDYGSKHNDRELPMAVGLCEEFAIKHQIIKLPFIGELFSSSLLTGGEEIPDGAYGQENMKSTVVPFRNGIMLAIAAGYAESVQAGEVLLGSHSGDHHIYPDCRPEFNNAFAEAVNLGTDGQVAIRFPFSEMTKRDIGDLGRTLDLDFAKTWTCYKGGELHCGVCAACDERKEALRHPEGLDVTKYLV.

8–18 serves as a coordination point for ATP; the sequence is LSGGMDSAVLL. Zn(2+) contacts are provided by cysteine 185, cysteine 193, cysteine 196, and cysteine 199.

It belongs to the QueC family. Zn(2+) is required as a cofactor.

The enzyme catalyses 7-carboxy-7-deazaguanine + NH4(+) + ATP = 7-cyano-7-deazaguanine + ADP + phosphate + H2O + H(+). It participates in purine metabolism; 7-cyano-7-deazaguanine biosynthesis. Its function is as follows. Catalyzes the ATP-dependent conversion of 7-carboxy-7-deazaguanine (CDG) to 7-cyano-7-deazaguanine (preQ(0)). This is 7-cyano-7-deazaguanine synthase from Desulfotalea psychrophila (strain LSv54 / DSM 12343).